The primary structure comprises 197 residues: Proteinase inhibitor type-2 (197 aa).

An N-terminal signal peptide occupies residues 1–24 (MAVHKVSFVAHLLVLGMFLLLVDA). 3 repeat units span residues 24-80 (AKAC…DPKN), 81-140 (PNVC…DEPK), and 141-196 (SCTT…PQSA). Intrachain disulfides connect C27–C115, C31–C111, C39–C121, C51–C88, C54–C72, C55–C84, C61–C97, and C114–C132.

The protein belongs to the protease inhibitor I20 (potato type II proteinase inhibitor) family.

The polypeptide is Proteinase inhibitor type-2 (Nicotiana tabacum (Common tobacco)).